A 788-amino-acid chain; its full sequence is Glycerol-3-phosphate acyltransferase (788 aa).

The interval 104–135 is disordered; that stretch reads LLPGRDPYHPNPRQQRRILRSDPQRARVMAGE. The short motif at 271-276 is the HXXXXD motif element; that stretch reads SHRSYI.

This sequence belongs to the GPAT/DAPAT family.

Its subcellular location is the cell membrane. It carries out the reaction sn-glycerol 3-phosphate + an acyl-CoA = a 1-acyl-sn-glycero-3-phosphate + CoA. Its pathway is phospholipid metabolism; CDP-diacylglycerol biosynthesis; CDP-diacylglycerol from sn-glycerol 3-phosphate: step 1/3. The protein is Glycerol-3-phosphate acyltransferase of Mycobacterium marinum (strain ATCC BAA-535 / M).